A 658-amino-acid polypeptide reads, in one-letter code: Glycogen debranching enzyme (658 aa).

Residue D336 is the Nucleophile of the active site. The Proton donor role is filled by E371. The tract at residues 459-483 (EANGEENRDGTNSNYSDNHGKEGLG) is disordered.

Belongs to the glycosyl hydrolase 13 family.

The catalysed reaction is Hydrolysis of (1-&gt;6)-alpha-D-glucosidic linkages to branches with degrees of polymerization of three or four glucose residues in limit dextrin.. It participates in glycan degradation; glycogen degradation. Its function is as follows. Removes maltotriose and maltotetraose chains that are attached by 1,6-alpha-linkage to the limit dextrin main chain, generating a debranched limit dextrin. The protein is Glycogen debranching enzyme of Salmonella agona (strain SL483).